Consider the following 35-residue polypeptide: uncharacterized protein (35 aa).

The signal sequence occupies residues Met-1–Ala-25.

This is an uncharacterized protein from Saccharomyces cerevisiae (strain ATCC 204508 / S288c) (Baker's yeast).